We begin with the raw amino-acid sequence, 418 residues long: Gamma-glutamyl phosphate reductase (418 aa).

It belongs to the gamma-glutamyl phosphate reductase family.

Its subcellular location is the cytoplasm. It carries out the reaction L-glutamate 5-semialdehyde + phosphate + NADP(+) = L-glutamyl 5-phosphate + NADPH + H(+). The protein operates within amino-acid biosynthesis; L-proline biosynthesis; L-glutamate 5-semialdehyde from L-glutamate: step 2/2. Catalyzes the NADPH-dependent reduction of L-glutamate 5-phosphate into L-glutamate 5-semialdehyde and phosphate. The product spontaneously undergoes cyclization to form 1-pyrroline-5-carboxylate. The protein is Gamma-glutamyl phosphate reductase of Desulfosudis oleivorans (strain DSM 6200 / JCM 39069 / Hxd3) (Desulfococcus oleovorans).